A 178-amino-acid polypeptide reads, in one-letter code: Dual-action ribosomal maturation protein DarP (178 aa).

The protein belongs to the DarP family.

Its subcellular location is the cytoplasm. In terms of biological role, member of a network of 50S ribosomal subunit biogenesis factors which assembles along the 30S-50S interface, preventing incorrect 23S rRNA structures from forming. Promotes peptidyl transferase center (PTC) maturation. This chain is Dual-action ribosomal maturation protein DarP, found in Haemophilus influenzae (strain PittEE).